Here is a 169-residue protein sequence, read N- to C-terminus: uncharacterized protein (169 aa).

An N-terminal signal peptide occupies residues 1–21; that stretch reads MVPVARASLFTLACLLVSVCA.

In terms of tissue distribution, component of the acid-soluble and acid-insoluble organic matrix of calcified shell layers (at protein level).

It localises to the secreted. This is an uncharacterized protein from Haliotis asinina (Donkey's ear abalone).